Here is a 198-residue protein sequence, read N- to C-terminus: Recombination protein RecR (198 aa).

The C4-type zinc-finger motif lies at 57–72 (CTICGHITDTDPCYIC). A Toprim domain is found at 80-175 (TTICVVQDPK…KVTRIAHGLP (96 aa)).

It belongs to the RecR family.

Its function is as follows. May play a role in DNA repair. It seems to be involved in an RecBC-independent recombinational process of DNA repair. It may act with RecF and RecO. This chain is Recombination protein RecR, found in Geobacillus kaustophilus (strain HTA426).